The sequence spans 256 residues: tRNA (guanine-N(1)-)-methyltransferase (256 aa).

S-adenosyl-L-methionine is bound by residues Gly-119 and 139 to 144 (IGDYVV).

It belongs to the RNA methyltransferase TrmD family. Homodimer.

The protein resides in the cytoplasm. The catalysed reaction is guanosine(37) in tRNA + S-adenosyl-L-methionine = N(1)-methylguanosine(37) in tRNA + S-adenosyl-L-homocysteine + H(+). Specifically methylates guanosine-37 in various tRNAs. This Nitrosospira multiformis (strain ATCC 25196 / NCIMB 11849 / C 71) protein is tRNA (guanine-N(1)-)-methyltransferase.